Consider the following 1231-residue polypeptide: Chromosome-associated kinesin KIF4 (1231 aa).

Residues Pro-9–Ile-337 form the Kinesin motor domain. Gly-88–Thr-95 contacts ATP. Residues Glu-351–Val-1000 are a coiled coil. Position 395 is a phosphoserine (Ser-395). At Thr-800 the chain carries Phosphothreonine. Ser-802, Ser-811, and Ser-816 each carry phosphoserine. Positions Ala-1001–His-1231 are globular. The tract at residues His-1189–Ala-1212 is disordered. 2 positions are modified to phosphoserine: Ser-1224 and Ser-1230.

The protein belongs to the TRAFAC class myosin-kinesin ATPase superfamily. Kinesin family. Chromokinesin subfamily. It depends on [2Fe-2S] cluster as a cofactor. The cofactor is [4Fe-4S] cluster. In terms of tissue distribution, expressed in pyramidal cells in juvenile hippocampus, granular cells in juvenile cerebellar cortex and in adult spleen.

It localises to the nucleus. It is found in the chromosome. The protein resides in the cytoplasm. Its subcellular location is the cytoskeleton. In terms of biological role, iron-sulfur (Fe-S) cluster binding motor protein that has a role in chromosome segregation during mitosis. Required for mitotic chromosomal positioning and bipolar spindle stabilization. The chain is Chromosome-associated kinesin KIF4 (Kif4) from Mus musculus (Mouse).